A 37-amino-acid polypeptide reads, in one-letter code: Cytochrome b6-f complex subunit 5 (37 aa).

Residues 5–25 (LLSGIVLGLVPVTIAGLFVTA) traverse the membrane as a helical segment.

The protein belongs to the PetG family. The 4 large subunits of the cytochrome b6-f complex are cytochrome b6, subunit IV (17 kDa polypeptide, PetD), cytochrome f and the Rieske protein, while the 4 small subunits are PetG, PetL, PetM and PetN. The complex functions as a dimer.

The protein resides in the plastid. It localises to the chloroplast thylakoid membrane. Its function is as follows. Component of the cytochrome b6-f complex, which mediates electron transfer between photosystem II (PSII) and photosystem I (PSI), cyclic electron flow around PSI, and state transitions. PetG is required for either the stability or assembly of the cytochrome b6-f complex. The protein is Cytochrome b6-f complex subunit 5 of Chlorella vulgaris (Green alga).